A 75-amino-acid chain; its full sequence is Defensin-like protein 59 (75 aa).

The N-terminal stretch at 1 to 19 (MNITKSYVVIFFLVMLTNS) is a signal peptide. Intrachain disulfides connect Cys39-Cys73, Cys43-Cys66, Cys52-Cys71, and Cys56-Cys72.

The protein belongs to the DEFL family.

The protein resides in the secreted. This Arabidopsis thaliana (Mouse-ear cress) protein is Defensin-like protein 59.